The chain runs to 383 residues: MTSYESQGQSPTRCGPQFLSLGQEPPELSLYSDSYYPPPSLPSPQRTNPSSYELGDYAASSPNPYLWFNSPGMNSAPYLGGTPGPAGPSFVPQHYGMQRPYLGPGPPGGPGGELSWFSMPSQEDLMKLVRPPYSYSALIAMAIHGAPERRLTLSQIYQYVADNFPFYNKSKAGWQNSIRHNLSLNDCFKKVPRDEDDPGKGNYWTLDPNCEKMFDNGNFRRKRKRKSDSLPEKSSSGGNESGDSNGRGSPKSQSIDISTSPEKGPSPASTGPSPCLSNFLTEMSGVAAGSLDMEADPLSRPFTLSLPVDGAQRASQTTGFSTFTPSTTVSDWASPLPPPPPMSSSPSHSTLAYSGPVLSQFNGHFFPGLSSTGILYPREGTEV.

A compositionally biased stretch (polar residues) spans Met1–Thr12. 3 disordered regions span residues Met1 to Gly55, Asp215 to Ser277, and Thr317 to His348. Residues Pro25–Tyr35 are compositionally biased toward low complexity. The fork-head DNA-binding region spans Arg130–Lys224. Residues Arg220 to Lys226 carry the Nuclear localization signal motif. Residues Ser234–Ser249 show a composition bias toward low complexity. Residues Pro250–Ser277 are compositionally biased toward polar residues. A compositionally biased stretch (low complexity) spans Thr317 to Ser330.

In terms of tissue distribution, expressed in ionocyte precursors.

It is found in the nucleus. Functionally, transcription factor required for epithelial cell differentiation. Involved in specification of skin ionocytes from epidermal precursors. This Danio rerio (Zebrafish) protein is Forkhead box protein I3-B.